Here is a 234-residue protein sequence, read N- to C-terminus: Enterobactin synthase component D (234 aa).

Residues Asp-107, Glu-109, and Glu-152 each coordinate Mg(2+).

It belongs to the P-Pant transferase superfamily. EntD family. As to quaternary structure, entB, EntD, EntE, and EntF form a multienzyme complex called enterobactin synthase. Requires Mg(2+) as cofactor.

It localises to the membrane. The catalysed reaction is apo-[aryl-carrier protein] + CoA = holo-[aryl-carrier protein] + adenosine 3',5'-bisphosphate + H(+). It carries out the reaction apo-[peptidyl-carrier protein] + CoA = holo-[peptidyl-carrier protein] + adenosine 3',5'-bisphosphate + H(+). It functions in the pathway siderophore biosynthesis; enterobactin biosynthesis. Its function is as follows. Involved in the biosynthesis of the siderophore enterobactin (enterochelin), which is a macrocyclic trimeric lactone of N-(2,3-dihydroxybenzoyl)-serine. The serine trilactone serves as a scaffolding for the three catechol functionalities that provide hexadentate coordination for the tightly ligated iron(2+) atoms. Plays an essential role in the assembly of the enterobactin by catalyzing the transfer of the 4'-phosphopantetheine (Ppant) moiety from coenzyme A to the apo-domains of both EntB (ArCP domain) and EntF (PCP domain) to yield their holo-forms which make them competent for the activation of 2,3-dihydroxybenzoate (DHB) and L-serine, respectively. This is Enterobactin synthase component D from Salmonella typhimurium (strain LT2 / SGSC1412 / ATCC 700720).